The chain runs to 454 residues: Jacalin-related lectin 37 (454 aa).

Positions 295–438 (SRFTPPRGIQ…LTALGVHFSP (144 aa)) constitute a Jacalin-type lectin domain.

It belongs to the jacalin lectin family.

The polypeptide is Jacalin-related lectin 37 (JAL37) (Arabidopsis thaliana (Mouse-ear cress)).